The chain runs to 173 residues: GTP-dependent dephospho-CoA kinase (173 aa).

GTP-binding residues include D52, V53, V54, D71, K73, and D122.

It belongs to the GTP-dependent DPCK family.

It carries out the reaction 3'-dephospho-CoA + GTP = GDP + CoA + H(+). The protein operates within cofactor biosynthesis; coenzyme A biosynthesis. Its function is as follows. Catalyzes the GTP-dependent phosphorylation of the 3'-hydroxyl group of dephosphocoenzyme A to form coenzyme A (CoA). This Metallosphaera sedula (strain ATCC 51363 / DSM 5348 / JCM 9185 / NBRC 15509 / TH2) protein is GTP-dependent dephospho-CoA kinase.